We begin with the raw amino-acid sequence, 694 residues long: Two-component response regulator ORR25 (694 aa).

In terms of domain architecture, Response regulatory spans 17–132 (RVLAVDDSPV…DIQNIWQHVW (116 aa)). Residue aspartate 68 is modified to 4-aspartylphosphate. The HTH myb-type domain occupies 183–242 (TLKRQRVVWTPELHRDFVIAVHELGVDRAVPRKILRMMKVDYMTRENIASHLQKYRLYLK). The H-T-H motif DNA-binding region spans 213 to 238 (PRKILRMMKVDYMTRENIASHLQKYR). A disordered region spans residues 326-349 (VGHGGSPGNNPVFQPLQNSSNARK). Polar residues predominate over residues 333-347 (GNNPVFQPLQNSSNA).

Belongs to the ARR family. Type-B subfamily. Post-translationally, two-component system major event consists of a His-to-Asp phosphorelay between a sensor histidine kinase (HK) and a response regulator (RR). In plants, the His-to-Asp phosphorelay involves an additional intermediate named Histidine-containing phosphotransfer protein (HPt). This multistep phosphorelay consists of a His-Asp-His-Asp sequential transfer of a phosphate group between first a His and an Asp of the HK protein, followed by the transfer to a conserved His of the HPt protein and finally the transfer to an Asp in the receiver domain of the RR protein.

The protein resides in the nucleus. In terms of biological role, transcriptional activator that binds specific DNA sequence. Functions as a response regulator involved in His-to-Asp phosphorelay signal transduction system. Phosphorylation of the Asp residue in the receiver domain activates the ability of the protein to promote the transcription of target genes. May directly activate some type-A response regulators in response to cytokinins. The sequence is that of Two-component response regulator ORR25 from Oryza sativa subsp. japonica (Rice).